The following is a 153-amino-acid chain: 3-hydroxyacyl-[acyl-carrier-protein] dehydratase FabZ (153 aa).

His58 is a catalytic residue.

The protein belongs to the thioester dehydratase family. FabZ subfamily.

The protein resides in the cytoplasm. It carries out the reaction a (3R)-hydroxyacyl-[ACP] = a (2E)-enoyl-[ACP] + H2O. Involved in unsaturated fatty acids biosynthesis. Catalyzes the dehydration of short chain beta-hydroxyacyl-ACPs and long chain saturated and unsaturated beta-hydroxyacyl-ACPs. This is 3-hydroxyacyl-[acyl-carrier-protein] dehydratase FabZ from Bradyrhizobium diazoefficiens (strain JCM 10833 / BCRC 13528 / IAM 13628 / NBRC 14792 / USDA 110).